The primary structure comprises 170 residues: Single-stranded DNA-binding protein (170 aa).

Residues 1 to 26 form an oligomerization region; sequence MSNELKQVEQTEEAVVVSETKDYIKV.

Belongs to the phi29likevirus single-strand-binding protein family. Hexamer.

Functionally, single-stranded DNA-binding protein required for the elongation during viral DNA replication by strand displacement. Displaced viral DNA strands are transiently coated with the ssDNA-binding protein and therefore protected againt nucleases. The latter is then probably removed by the replisome that performs lagging strand synthesis or during the events that lead up to the recombination process. Has helix-destabilizing activity since it removes secondary structure from the ssDNA in replicative intermediates. This chain is Single-stranded DNA-binding protein, found in Bacillus subtilis (Bacteriophage GA-1).